The following is a 65-amino-acid chain: Large ribosomal subunit protein bL31 (65 aa).

Residues Cys-16, Cys-18, Cys-36, and Cys-39 each coordinate Zn(2+).

The protein belongs to the bacterial ribosomal protein bL31 family. Type A subfamily. Part of the 50S ribosomal subunit. Requires Zn(2+) as cofactor.

Its function is as follows. Binds the 23S rRNA. The protein is Large ribosomal subunit protein bL31 of Geobacter sulfurreducens (strain ATCC 51573 / DSM 12127 / PCA).